Consider the following 106-residue polypeptide: Phosphoribosyl-ATP pyrophosphatase (106 aa).

Belongs to the PRA-PH family.

Its subcellular location is the cytoplasm. It catalyses the reaction 1-(5-phospho-beta-D-ribosyl)-ATP + H2O = 1-(5-phospho-beta-D-ribosyl)-5'-AMP + diphosphate + H(+). It functions in the pathway amino-acid biosynthesis; L-histidine biosynthesis; L-histidine from 5-phospho-alpha-D-ribose 1-diphosphate: step 2/9. The polypeptide is Phosphoribosyl-ATP pyrophosphatase (Rhizorhabdus wittichii (strain DSM 6014 / CCUG 31198 / JCM 15750 / NBRC 105917 / EY 4224 / RW1) (Sphingomonas wittichii)).